The sequence spans 591 residues: MHRYRTHTCGALRDSHIDQTVRLSGWCHRIRDHGGVLFIDLRDHYGLTQCVADPDSPAFKDAEKLRAEWVVRIDGKVRRRPEGTDNPDLPTGAVEVFVTEIEVLGPAGELPLPVFGEQEYPEDVRLRYRFLDLRREKLHQNIMTRGAIVDSMRRRMKEQGFFEFQTPILTASSPEGARDFLVPSRIHPGKFYALPQAPQQYKQLLMMSGFDRYFQIAPCFRDEDPRADRLPGEFYQLDVEMSFVTQDDIFAAMEPVITGVFEEFAKGKRVTKGWPRIAFADSMRKYGTDKPDLRNPIEMQDVSEHFRGSGFKVFARMLEEQRNQVWAIPGPGGGSRAFCDRMNSWAQGEGQPGLGYIMWREGGEGAGPLANNIGPERTEAIRAALGLKAGDAAFFVAGDPSKFVKFAGLARTKVGEELNLIDKDQFALAWVVDFPMYEYNEDDKKVDFSHNPFSMPQGGMEALTSQDPLTIKAFQYDITCNGYEIASGGIRNHRPEAMVKAFEIAGYGEQEVVDRFGGMYRAFQYGAPPHGGMAAGVDRIVMLLCGTTNLREISLFPMNQRAEDLLMGAPSEVSPKQLRELHIRLNLPDTK.

Glu-175 provides a ligand contact to L-aspartate. The tract at residues 199–202 is aspartate; that stretch reads QQYK. Positions 221 and 450 each coordinate L-aspartate. An ATP-binding site is contributed by 221-223; that stretch reads RDE. Glu-484 is a binding site for ATP. Arg-491 is a binding site for L-aspartate. 536 to 539 contacts ATP; it reads GVDR.

The protein belongs to the class-II aminoacyl-tRNA synthetase family. Type 1 subfamily. Homodimer.

The protein localises to the cytoplasm. The enzyme catalyses tRNA(Asx) + L-aspartate + ATP = L-aspartyl-tRNA(Asx) + AMP + diphosphate. In terms of biological role, aspartyl-tRNA synthetase with relaxed tRNA specificity since it is able to aspartylate not only its cognate tRNA(Asp) but also tRNA(Asn). Reaction proceeds in two steps: L-aspartate is first activated by ATP to form Asp-AMP and then transferred to the acceptor end of tRNA(Asp/Asn). The polypeptide is Aspartate--tRNA(Asp/Asn) ligase (Rhodopseudomonas palustris (strain ATCC BAA-98 / CGA009)).